The sequence spans 249 residues: Probable transcriptional regulatory protein ACIAD2052 (249 aa).

It belongs to the TACO1 family.

Its subcellular location is the cytoplasm. The polypeptide is Probable transcriptional regulatory protein ACIAD2052 (Acinetobacter baylyi (strain ATCC 33305 / BD413 / ADP1)).